Here is a 262-residue protein sequence, read N- to C-terminus: Phosphate import ATP-binding protein PstB 2 (262 aa).

One can recognise an ABC transporter domain in the interval F18–I257. G50–S57 is an ATP binding site.

This sequence belongs to the ABC transporter superfamily. Phosphate importer (TC 3.A.1.7) family. The complex is composed of two ATP-binding proteins (PstB), two transmembrane proteins (PstC and PstA) and a solute-binding protein (PstS).

The protein resides in the cell membrane. The catalysed reaction is phosphate(out) + ATP + H2O = ADP + 2 phosphate(in) + H(+). Functionally, part of the ABC transporter complex PstSACB involved in phosphate import. Responsible for energy coupling to the transport system. This is Phosphate import ATP-binding protein PstB 2 from Symbiobacterium thermophilum (strain DSM 24528 / JCM 14929 / IAM 14863 / T).